Reading from the N-terminus, the 372-residue chain is tRNA pseudouridine synthase D (372 aa).

Asp-85 functions as the Nucleophile in the catalytic mechanism. Positions 160–330 (GFTNYFGYQR…MQGSRRFMWG (171 aa)) constitute a TRUD domain.

The protein belongs to the pseudouridine synthase TruD family.

It catalyses the reaction uridine(13) in tRNA = pseudouridine(13) in tRNA. Its function is as follows. Responsible for synthesis of pseudouridine from uracil-13 in transfer RNAs. The sequence is that of tRNA pseudouridine synthase D from Campylobacter jejuni subsp. jejuni serotype O:23/36 (strain 81-176).